We begin with the raw amino-acid sequence, 391 residues long: Arginine biosynthesis bifunctional protein ArgJ (391 aa).

Residues Thr149, Lys172, Thr183, Glu263, Asn386, and Ser391 each contribute to the substrate site. Thr183 functions as the Nucleophile in the catalytic mechanism.

Belongs to the ArgJ family. Heterotetramer of two alpha and two beta chains.

Its subcellular location is the cytoplasm. The catalysed reaction is N(2)-acetyl-L-ornithine + L-glutamate = N-acetyl-L-glutamate + L-ornithine. The enzyme catalyses L-glutamate + acetyl-CoA = N-acetyl-L-glutamate + CoA + H(+). Its pathway is amino-acid biosynthesis; L-arginine biosynthesis; L-ornithine and N-acetyl-L-glutamate from L-glutamate and N(2)-acetyl-L-ornithine (cyclic): step 1/1. The protein operates within amino-acid biosynthesis; L-arginine biosynthesis; N(2)-acetyl-L-ornithine from L-glutamate: step 1/4. In terms of biological role, catalyzes two activities which are involved in the cyclic version of arginine biosynthesis: the synthesis of N-acetylglutamate from glutamate and acetyl-CoA as the acetyl donor, and of ornithine by transacetylation between N(2)-acetylornithine and glutamate. The chain is Arginine biosynthesis bifunctional protein ArgJ from Bifidobacterium longum (strain NCC 2705).